The sequence spans 603 residues: MAAESGELIGACEFMKDRLYFATLRNRPKSTINIHYFSIDEELVYENFYADFGPLNLAMVYRYCCKLNKKLKSYSLSRKKIVHYTSFDQRKRANAAFLIGAYAVIYLKKTPEEAYRALLSGSNPPYLPFRDASFGNCTYNLTVLDCLQGIRKGLQHGFFDFETFDAEEYEHYERVENGDFNWIVPGKFLAFSGPHPKSKIENGYPLHAPEAYFPYFKKNNVTTIVRLNKKIYEAKRFTDAGFEHYDLFFIDGSTPSDNIVRRFLNICENTEGAIAVHCKAGLGRTGTLIACYVMKHYRFTHAEIIAWIRICRPGSIIGPQQHFLKEKQASLWVQGDIFRSKLKNRPSSEGSITKIISTLDDMSIGANLSKLQSTERIGENNFEDEDMEIKNNVTQGDKLRALKSQRHPRSSPSCAFRSDDMKGHQRAMAQTFRLSSSPQPTMSTMKTSKVCLSPSVTAKKISRGSLSSGANIRSFSINSRLASSLGNLNAGTEEPETKKTTSLTKAAFIASPFTSFLNGSTQTPGRNYPELNNNQYTRSSNSNSSSSSSGLGGNLNSSPVPQSAKPEEHTTILRPSFPGSLSSSSVRFLSRSIPSLQSEYVHY.

The segment at 7–162 (ELIGACEFMK…GLQHGFFDFE (156 aa)) is a. Residues 163-176 (TFDAEEYEHYERVE) form a linker region. Positions 177-343 (NGDFNWIVPG…QGDIFRSKLK (167 aa)) are b. In terms of domain architecture, Tyrosine-protein phosphatase spans 179–336 (DFNWIVPGKF…KQASLWVQGD (158 aa)). The active-site Phosphocysteine intermediate is cysteine 278. Serine 484 bears the Phosphoserine mark. The segment covering 518 to 538 (NGSTQTPGRNYPELNNNQYTR) has biased composition (polar residues). The interval 518 to 583 (NGSTQTPGRN…RPSFPGSLSS (66 aa)) is disordered. Composition is skewed to low complexity over residues 539 to 558 (SSNS…LNSS) and 573 to 583 (LRPSFPGSLSS). A Phosphoserine modification is found at serine 592.

This sequence belongs to the protein-tyrosine phosphatase family. Non-receptor class CDC14 subfamily. As to quaternary structure, interacts with KIF20A. Interaction is required to localize CDC14 to the midzone of the mitotic spindle. As to expression, expressed in the inner ear.

The protein resides in the nucleus. It localises to the cytoplasm. The protein localises to the cytoskeleton. It is found in the microtubule organizing center. Its subcellular location is the centrosome. The protein resides in the spindle. It localises to the cell projection. The protein localises to the kinocilium. It is found in the spindle pole. Its subcellular location is the stereocilium. The enzyme catalyses O-phospho-L-tyrosyl-[protein] + H2O = L-tyrosyl-[protein] + phosphate. It catalyses the reaction O-phospho-L-seryl-[protein] + H2O = L-seryl-[protein] + phosphate. It carries out the reaction O-phospho-L-threonyl-[protein] + H2O = L-threonyl-[protein] + phosphate. Functionally, dual-specificity phosphatase. Required for centrosome separation and productive cytokinesis during cell division. Dephosphorylates SIRT2 around early anaphase. May dephosphorylate the APC subunit FZR1/CDH1, thereby promoting APC-FZR1 dependent degradation of mitotic cyclins and subsequent exit from mitosis. Required for normal hearing. This is Dual specificity protein phosphatase CDC14A (Cdc14a) from Mus musculus (Mouse).